A 163-amino-acid chain; its full sequence is 3-dehydroquinate dehydratase (163 aa).

Y28 serves as the catalytic Proton acceptor. Positions 80, 86, and 93 each coordinate substrate. The Proton donor role is filled by H106. Substrate is bound by residues 107–108 and R117; that span reads IS.

The protein belongs to the type-II 3-dehydroquinase family. As to quaternary structure, homododecamer.

It catalyses the reaction 3-dehydroquinate = 3-dehydroshikimate + H2O. Its pathway is metabolic intermediate biosynthesis; chorismate biosynthesis; chorismate from D-erythrose 4-phosphate and phosphoenolpyruvate: step 3/7. Its function is as follows. Catalyzes a trans-dehydration via an enolate intermediate. The chain is 3-dehydroquinate dehydratase from Bradyrhizobium sp. (strain BTAi1 / ATCC BAA-1182).